A 311-amino-acid chain; its full sequence is GTP cyclohydrolase FolE2 (311 aa).

Belongs to the GTP cyclohydrolase IV family.

It carries out the reaction GTP + H2O = 7,8-dihydroneopterin 3'-triphosphate + formate + H(+). Its pathway is cofactor biosynthesis; 7,8-dihydroneopterin triphosphate biosynthesis; 7,8-dihydroneopterin triphosphate from GTP: step 1/1. Converts GTP to 7,8-dihydroneopterin triphosphate. This is GTP cyclohydrolase FolE2 from Hydrogenovibrio crunogenus (strain DSM 25203 / XCL-2) (Thiomicrospira crunogena).